Consider the following 485-residue polypeptide: Glutamyl-tRNA(Gln) amidotransferase subunit A (485 aa).

Catalysis depends on charge relay system residues lysine 79 and serine 154. Serine 178 acts as the Acyl-ester intermediate in catalysis.

The protein belongs to the amidase family. GatA subfamily. Heterotrimer of A, B and C subunits.

The catalysed reaction is L-glutamyl-tRNA(Gln) + L-glutamine + ATP + H2O = L-glutaminyl-tRNA(Gln) + L-glutamate + ADP + phosphate + H(+). Functionally, allows the formation of correctly charged Gln-tRNA(Gln) through the transamidation of misacylated Glu-tRNA(Gln) in organisms which lack glutaminyl-tRNA synthetase. The reaction takes place in the presence of glutamine and ATP through an activated gamma-phospho-Glu-tRNA(Gln). The protein is Glutamyl-tRNA(Gln) amidotransferase subunit A of Staphylococcus aureus.